A 494-amino-acid chain; its full sequence is Tetracenomycin biosynthesis bifunctional cyclase/O-methyl transferase TcmN (494 aa).

The tract at residues 11–140 (VNAPFELVWD…TTTRANMERI (130 aa)) is polyketide cyclase. The Proton acceptor; for cyclase activity role is filled by Ser-67. Active-site proton donor; for cyclase activity residues include Arg-69 and Arg-82. The methyltransferase stretch occupies residues 169–494 (LLLAASGRLA…TWTTLECRPV (326 aa)). S-adenosyl-L-methionine is bound by residues Asp-358 and 384-386 (GDF). His-405 serves as the catalytic Proton acceptor; for methyltransferase activity.

In the C-terminal section; belongs to the class I-like SAM-binding methyltransferase superfamily. Cation-independent O-methyltransferase family. In terms of assembly, the tetracenomycin polyketide synthase (TCM PKS) is composed of a ketosynthase complex (TcmKL), an acyl carrier protein (TcmM), a cyclase (TcmN) and a probable second cyclase (TcmJ). TcmN is a homodimer in solution.

It carries out the reaction 10 malonyl-CoA + 8 H(+) = tetracenomycin F2 + 10 CO2 + 10 CoA + 2 H2O. The protein operates within antibiotic biosynthesis; tetracenomycin C biosynthesis. Functionally, involved in the biosynthesis of tetracenomycin C (TCM C). Part of a type II polyketide synthase (PKS) that catalyzes the synthesis of tetracenomycin F2 (TCM F2), a precursor of TCM C, from malonyl-CoA. The TcmN N-terminal domain, when coupled with the other components of the PKS, catalyzes the cyclization and aromatization of the linear polyketide intermediate. Catalyzes the cyclization of the first and second rings. In addition, the C-terminal domain acts as a methyltransferase. It catalyzes the specific O-methylation of tetracenomycin D3 (TCM D3) to TCM B3, using S-adenosyl-L-methionine as the methyl donor. This Streptomyces glaucescens protein is Tetracenomycin biosynthesis bifunctional cyclase/O-methyl transferase TcmN.